A 179-amino-acid polypeptide reads, in one-letter code: Putative manganese efflux pump MntP (179 aa).

The next 6 membrane-spanning stretches (helical) occupy residues 4–24 (VLILAFALSMDAFAVSIGLGI), 39–59 (LFFGIFQALMPFLGFLGGIGL), 69–89 (IVAFILLLAIGGKMIYEAFNE), 102–122 (ILLTLAIATSLDAMAAGYSLH), 128–148 (IYLSLFVIGFTTFIISYIGVY), and 159–179 (SKAEILGGVVLILIGLKILLF).

It belongs to the MntP (TC 9.B.29) family.

Its subcellular location is the cell inner membrane. Its function is as follows. Probably functions as a manganese efflux pump. In Aliarcobacter butzleri (strain RM4018) (Arcobacter butzleri), this protein is Putative manganese efflux pump MntP.